Consider the following 72-residue polypeptide: Translation initiation factor IF-1 (72 aa).

Residues 1-72 form the S1-like domain; the sequence is MAKEDVIEMQ…SKGRIVFRAR (72 aa).

It belongs to the IF-1 family. As to quaternary structure, component of the 30S ribosomal translation pre-initiation complex which assembles on the 30S ribosome in the order IF-2 and IF-3, IF-1 and N-formylmethionyl-tRNA(fMet); mRNA recruitment can occur at any time during PIC assembly.

It is found in the cytoplasm. Functionally, one of the essential components for the initiation of protein synthesis. Stabilizes the binding of IF-2 and IF-3 on the 30S subunit to which N-formylmethionyl-tRNA(fMet) subsequently binds. Helps modulate mRNA selection, yielding the 30S pre-initiation complex (PIC). Upon addition of the 50S ribosomal subunit IF-1, IF-2 and IF-3 are released leaving the mature 70S translation initiation complex. The protein is Translation initiation factor IF-1 of Pseudoalteromonas translucida (strain TAC 125).